The following is a 296-amino-acid chain: 4-hydroxy-tetrahydrodipicolinate synthase (296 aa).

Threonine 49 provides a ligand contact to pyruvate. Tyrosine 137 serves as the catalytic Proton donor/acceptor. The Schiff-base intermediate with substrate role is filled by lysine 165. Residue valine 207 participates in pyruvate binding.

The protein belongs to the DapA family. In terms of assembly, homotetramer; dimer of dimers.

Its subcellular location is the cytoplasm. It carries out the reaction L-aspartate 4-semialdehyde + pyruvate = (2S,4S)-4-hydroxy-2,3,4,5-tetrahydrodipicolinate + H2O + H(+). Its pathway is amino-acid biosynthesis; L-lysine biosynthesis via DAP pathway; (S)-tetrahydrodipicolinate from L-aspartate: step 3/4. Functionally, catalyzes the condensation of (S)-aspartate-beta-semialdehyde [(S)-ASA] and pyruvate to 4-hydroxy-tetrahydrodipicolinate (HTPA). In Nitrobacter hamburgensis (strain DSM 10229 / NCIMB 13809 / X14), this protein is 4-hydroxy-tetrahydrodipicolinate synthase.